The following is an 806-amino-acid chain: MSNFNQISRRDFVKASSAGAALAVSNLTLPFNVMAKETQRLNENNQERIVWSACTVNCGSRCPLRMHVKDNRITYVETDNTGTETYNLDHQVRACLRGRSMRRRVYNPDRLKYPMKRIGKRGEGKFKRISWDEALTEIADALKRNIKKYGNESIYLNYGTGTLGGTMAKSWPPASTMIARFMNCIGGYLNHYGDYSTAQIAVGLDYTYGGGWALGNGMADIENTKLIVLFGNNPAETRMSGGGLTYCIEQAKARSNAKMIIIDPRYNDTGAGREDEWIPIRPGTDAALVAALAYVMIQENLVDQPFLDKYCVGYDEKTLPTDAPKNGHYKAYILGYGNDGIAKTPEWAAKITGIPAERIIKLAREIGSTKPAFISQGWGPQRRSNGELISRAIAMLPILTGNVGIHGGNTGARESAYSIPFVRMPTLKNPVKASIPMFLWTDAIIRGTEMTALTDGIRGVDKLSSPIKVIWNYASNCLINQHAQINRTHDILQDDTQCEMIITIDNHMTSTAKYSDILLPDCTTSEQMDFALDAFVSNMAYVIFADQVIKPSFECRPIYDMLSDLAEKMGVKEKFTEGRTQEEWLRHIYEQSREKLPELPTFEEFRQQGIFKKVDPNGFKVAYKDFRDNPEAHPLKTPSGKIEIYSSRLAEIAKTWKLAEDDVIHPLPIHAQSFEHYGDPLMEKYPLQLSGFHYKARTHSTYGNVDVLKAANPQEVWMNPIDAEPRNIKNGDMIRIFNDRGEVHINVKITPRIIPGVVALSEGAWYAPDKDRIDHSGCINVLTTQRPSPLAKGNPQHSNLVQVERL.

The tat-type signal signal peptide spans 1–35 (MSNFNQISRRDFVKASSAGAALAVSNLTLPFNVMA). The region spanning 47-109 (ERIVWSACTV…SMRRRVYNPD (63 aa)) is the 4Fe-4S Mo/W bis-MGD-type domain. The [4Fe-4S] cluster site is built by cysteine 54, cysteine 58, cysteine 62, and cysteine 95. Mo-bis(molybdopterin guanine dinucleotide) is bound by residues 163 to 167 (LGGTM), serine 196, 236 to 237 (ET), 262 to 263 (ID), 283 to 285 (GTD), 378 to 379 (WG), arginine 382, asparagine 480, 504 to 505 (ID), histidine 693, 699 to 701 (HST), asparagine 780, and 796 to 797 (QH). Positions 786–806 (RPSPLAKGNPQHSNLVQVERL) are disordered. Polar residues predominate over residues 795 to 806 (PQHSNLVQVERL).

It belongs to the prokaryotic molybdopterin-containing oxidoreductase family. As to quaternary structure, heterotrimeric enzyme composed of a catalytic heterodimer (DmsAB) and a membrane anchor protein (DmsC). The cofactor is [4Fe-4S] cluster. Mo-bis(molybdopterin guanine dinucleotide) serves as cofactor. In terms of processing, predicted to be exported by the Tat system. The position of the signal peptide cleavage has not been experimentally proven.

The protein resides in the cell membrane. The catalysed reaction is dimethyl sulfide + a menaquinone + H2O = dimethyl sulfoxide + a menaquinol. Functionally, catalyzes the reduction of dimethyl sulfoxide (DMSO) to dimethyl sulfide (DMS). The terminal DMSO reductase can also use various sulfoxides and N-oxide compounds as terminal electron acceptor in addition to DMSO. In Haemophilus influenzae (strain ATCC 51907 / DSM 11121 / KW20 / Rd), this protein is Dimethyl sulfoxide reductase DmsA (dmsA).